The primary structure comprises 213 residues: Motile sperm domain-containing protein 1 (213 aa).

The MSP domain occupies 16 to 143 (PVFVFPTELI…KEHLTESLFF (128 aa)). The next 2 membrane-spanning stretches (helical) occupy residues 159–179 (SLLT…PTLG) and 191–211 (LSVN…MAIF). Residues 205-208 (LITM) carry the Nuclear export signal motif.

The protein localises to the endoplasmic reticulum membrane. Its subcellular location is the golgi apparatus membrane. Plays a role in differentiation and/or proliferation of mesenchymal stem cells. Proposed to be involved in epithelial-to-mesenchymal transition (EMT). However, another study suggests that it is not required for EMT or stem cell self-renewal and acts during later stages of differentiation. In Bos taurus (Bovine), this protein is Motile sperm domain-containing protein 1 (MOSPD1).